The following is an 828-amino-acid chain: Phenylalanine--tRNA ligase beta subunit (828 aa).

The region spanning 43–161 (LSKNTNLVVG…DQIALGSNAL (119 aa)) is the tRNA-binding domain. A disordered region spans residues 203 to 230 (KKKEKKTINYKTKNSKDQTNRKTTPKLN). The region spanning 436–519 (RTNPTISLDL…RFYGCHKLPP (84 aa)) is the B5 domain. Positions 497, 503, and 507 each coordinate Mg(2+). An FDX-ACB domain is found at 736–828 (PKFPTVIRDL…LIKHFRIEIR (93 aa)).

It belongs to the phenylalanyl-tRNA synthetase beta subunit family. Type 1 subfamily. Tetramer of two alpha and two beta subunits. Mg(2+) serves as cofactor.

Its subcellular location is the cytoplasm. The enzyme catalyses tRNA(Phe) + L-phenylalanine + ATP = L-phenylalanyl-tRNA(Phe) + AMP + diphosphate + H(+). The polypeptide is Phenylalanine--tRNA ligase beta subunit (Aster yellows witches'-broom phytoplasma (strain AYWB)).